The primary structure comprises 1142 residues: Ribonucleoside-diphosphate reductase large subunit (1142 aa).

The segment at 1-33 (MANRPAASALAGARSPSERQEPREPEVAPPGGD) is disordered. A compositionally biased stretch (basic and acidic residues) spans 16 to 26 (PSERQEPREPE). The short motif at 55 to 75 (AYRISDSSFVQCGSNCSMIID) is the RIP homotypic interaction motif (RHIM) element. The tract at residues 118–322 (SGPSATTSVG…TDPGYPVPLE (205 aa)) is disordered. Residues 119 to 132 (GPSATTSVGTQTSG) show a composition bias toward polar residues. Over residues 141–159 (TPEPQGPQAVPPPPPPPFP) the composition is skewed to pro residues. The segment covering 164–179 (CCARRDARGGAEKDVG) has biased composition (basic and acidic residues). Residues 192–205 (SETEDSDSSDEDTG) are compositionally biased toward acidic residues. Positions 277–303 (GSATDPRASADSDSAAHAAAPQADVAP) are enriched in low complexity. An alpha-crystallin domain region spans residues 294 to 400 (AAAPQADVAP…CLDLPPVPPN (107 aa)). Substrate contacts are provided by residues Thr-571, 586–587 (SC), Gly-617, 796–800 (NLCTE), and 973–977 (PTAAS). A disulfide bridge links Cys-587 with Cys-813. Catalysis depends on Asn-796, which acts as the Proton acceptor. Cys-798 acts as the Cysteine radical intermediate in catalysis. Residue Glu-800 is the Proton acceptor of the active site.

It belongs to the ribonucleoside diphosphate reductase large chain family. As to quaternary structure, heterotetramer composed of a homodimer of the large subunit (R1) and a homodimer of the small subunit (R2). Larger multisubunit protein complex are also active, composed of (R1)n(R2)n. May self-assemble (via RIP homotypic interaction motif/RHIM) into homomeric fibrillar amyloid structures. Interacts (via RHIM) with human RIPK1 (via RHIM). Interacts (via RHIM) with human RIPK3 (via RHIM). May interact (via RHIM) with human ZBP1 (via RHIM). Interacts (via C-terminus) with host CASP8.

It localises to the host cell membrane. The protein resides in the host endosome membrane. The catalysed reaction is a 2'-deoxyribonucleoside 5'-diphosphate + [thioredoxin]-disulfide + H2O = a ribonucleoside 5'-diphosphate + [thioredoxin]-dithiol. In terms of biological role, ribonucleoside-diphosphate reductase holoenzyme that provides the precursors necessary for viral DNA synthesis. Allows virus growth in non-dividing cells, as well as reactivation from latency in infected hosts. Catalyzes the biosynthesis of deoxyribonucleotides from the corresponding ribonucleotides. The N-terminal region confers antiapoptotic activity in differentiated cells such as neurons and is important for viral reactivation to increase neural survivability. Prevents host necroptosis by targeting host RIPK1 and RIPK3, thereby hampering the formation of necroptotic RIPK1-RIPK3 complexes. May form hetero-amyloid structures with host proteins RIPK3 or ZBP1, thereby preventing RIPK3- and ZBP1-mediated necroptosis. In addition, inhibits extrinsic apoptosis by targeting host CASP8. The sequence is that of Ribonucleoside-diphosphate reductase large subunit from Homo sapiens (Human).